We begin with the raw amino-acid sequence, 198 residues long: Large ribosomal subunit protein bL25 (198 aa).

Belongs to the bacterial ribosomal protein bL25 family. CTC subfamily. As to quaternary structure, part of the 50S ribosomal subunit; part of the 5S rRNA/L5/L18/L25 subcomplex. Contacts the 5S rRNA. Binds to the 5S rRNA independently of L5 and L18.

Functionally, this is one of the proteins that binds to the 5S RNA in the ribosome where it forms part of the central protuberance. The chain is Large ribosomal subunit protein bL25 from Pseudomonas putida (strain W619).